The chain runs to 173 residues: Inorganic pyrophosphatase (173 aa).

Residues K28, R42, and Y54 each coordinate substrate. 3 residues coordinate Mg(2+): D64, D69, and D101. Residue Y140 coordinates substrate.

The protein belongs to the PPase family. In terms of assembly, homohexamer. The cofactor is Mg(2+).

It is found in the cytoplasm. It carries out the reaction diphosphate + H2O = 2 phosphate + H(+). Functionally, catalyzes the hydrolysis of inorganic pyrophosphate (PPi) forming two phosphate ions. This is Inorganic pyrophosphatase from Helicobacter pylori (strain ATCC 700392 / 26695) (Campylobacter pylori).